We begin with the raw amino-acid sequence, 677 residues long: Collagen alpha-2(IX) chain (677 aa).

Positions Met1–Ala21 are cleaved as a signal peptide. The tract at residues Gly25–Ile161 is triple-helical region 4 (COL4). The segment covering Gly28–Val41 has biased composition (pro residues). The interval Gly28–Arg516 is disordered. Low complexity predominate over residues Ser53 to Pro66. The span at Ala68–Lys77 shows a compositional bias: pro residues. Gly residues predominate over residues Gly91–Gly100. Pro residues-rich tracts occupy residues Leu104 to Leu121 and Lys137 to Pro158. A 4-hydroxyproline modification is found at Pro158. Residues Gln162–Pro178 form a nonhelical region 4 (NC4) region. Ser167 carries O-linked (Xyl...) (glycosaminoglycan) serine glycosylation. A 4-hydroxyproline modification is found at Pro178. Residues Gly179–Asp517 are triple-helical region 3 (COL3). 5-hydroxylysine is present on Lys181. O-linked (Gal...) hydroxylysine glycosylation is present at Lys181. Lys190 bears the Allysine mark. Low complexity-rich tracts occupy residues Thr363–Pro382, Pro430–Pro442, and Arg496–Pro505. The interval Ala518–Leu547 is nonhelical region 3 (NC3). Residues Gly548–Ala630 form a triple-helical region 2 (COL2) region. Residues Val550–Gly657 are disordered. Pro residues predominate over residues Pro555–Pro565. Basic and acidic residues predominate over residues Lys597 to Arg609. The interval Leu631–Ala632 is nonhelical region 2 (NC2). The segment at Gly633–Cys662 is triple-helical region 1 (COL1). The tract at residues Glu663–Gly677 is nonhelical region 1 (NC1).

The protein belongs to the fibril-associated collagens with interrupted helices (FACIT) family. As to quaternary structure, heterotrimer of an alpha 1(IX), an alpha 2(IX) and an alpha 3(IX) chain. The chains are linked to each other by interchain disulfide bonds. Trimers are also cross-linked via hydroxylysines. Post-translationally, covalently linked to the telopeptides of type II collagen by lysine-derived cross-links. Prolines at the third position of the tripeptide repeating unit (G-X-Y) are hydroxylated in some or all of the chains.

The protein resides in the secreted. Its subcellular location is the extracellular space. It localises to the extracellular matrix. Its function is as follows. Structural component of hyaline cartilage and vitreous of the eye. This chain is Collagen alpha-2(IX) chain (COL9A2), found in Gallus gallus (Chicken).